A 114-amino-acid chain; its full sequence is Large ribosomal subunit protein bL19 (114 aa).

The protein belongs to the bacterial ribosomal protein bL19 family.

Functionally, this protein is located at the 30S-50S ribosomal subunit interface and may play a role in the structure and function of the aminoacyl-tRNA binding site. In Lactococcus lactis subsp. cremoris (strain MG1363), this protein is Large ribosomal subunit protein bL19.